Reading from the N-terminus, the 157-residue chain is 6,7-dimethyl-8-ribityllumazine synthase 1 (157 aa).

5-amino-6-(D-ribitylamino)uracil-binding positions include phenylalanine 22, 53 to 55, and 82 to 84; these read ALE and TVI. (2S)-2-hydroxy-3-oxobutyl phosphate is bound at residue 87 to 88; sequence ET. The active-site Proton donor is histidine 90. Asparagine 115 provides a ligand contact to 5-amino-6-(D-ribitylamino)uracil. A (2S)-2-hydroxy-3-oxobutyl phosphate-binding site is contributed by histidine 129.

Belongs to the DMRL synthase family. Homopentamer.

The catalysed reaction is (2S)-2-hydroxy-3-oxobutyl phosphate + 5-amino-6-(D-ribitylamino)uracil = 6,7-dimethyl-8-(1-D-ribityl)lumazine + phosphate + 2 H2O + H(+). It participates in cofactor biosynthesis; riboflavin biosynthesis; riboflavin from 2-hydroxy-3-oxobutyl phosphate and 5-amino-6-(D-ribitylamino)uracil: step 1/2. Catalyzes the formation of 6,7-dimethyl-8-ribityllumazine by condensation of 5-amino-6-(D-ribitylamino)uracil with 3,4-dihydroxy-2-butanone 4-phosphate. This is the penultimate step in the biosynthesis of riboflavin. The protein is 6,7-dimethyl-8-ribityllumazine synthase 1 (ribH1) of Brucella abortus (strain 2308).